The chain runs to 4074 residues: Fibrocystin (4074 aa).

Positions 1–22 (MIVWLISLMSIEILLLAGPALS) are cleaved as a signal peptide. Residues N54 and N224 are each glycosylated (N-linked (GlcNAc...) asparagine). Residues 258-310 (EILSVFPETGSLGGKTDIIITGDFFDNPALVTIAGVPCDIRHMSPRKIECTTR) form the IPT/TIG 1 domain. Residues 323 to 483 (AGNRGLLFEV…TWLNPDVVST (161 aa)) enclose the PA14 domain. N-linked (GlcNAc...) asparagine glycans are attached at residues N355, N385, N518, N527, N640, N710, N741, N822, N829, N868, N953, N966, N976, N1006, N1059, N1083, N1115, N1134, N1233, N1240, N1274, N1284, N1308, N1319, N1342, N1373, N1445, N1456, N1471, N1490, N1528, N1560, N1578, N1598, N1627, N1694, N1760, N1775, N1789, N1875, N1915, N1941, N1955, N2030, N2111, and N2140. The IPT/TIG 2 domain maps to 944-1000 (SLLIYIFGINFSGDPQALEIMVNKTNCKVIFSNQTNVICQTDLLPVGMHRLFMVVRP). IPT/TIG domains are found at residues 1018–1101 (PRLD…AFTY), 1107–1186 (PVIT…RSPG), and 1199–1274 (SIEP…WAGN). In terms of domain architecture, IPT/TIG 6 spans 1385–1464 (PWIMAISPTH…LNVTVIVNGL (80 aa)). In terms of domain architecture, IPT/TIG 7 spans 1573–1641 (HYFPKNFSIH…LVIEVDGLSY (69 aa)). The G8 1 domain occupies 1928 to 2049 (HSWFPERVPQ…PEVTFTHLQA (122 aa)). 5 PbH1 repeats span residues 2245–2267 (TLGL…LVGT), 2288–2322 (EQGN…YILN), 2351–2373 (APLL…FIYP), 2383–2404 (RGPT…RISR), and 2405–2427 (SSNL…DILE). The N-linked (GlcNAc...) asparagine glycan is linked to N2390. N-linked (GlcNAc...) asparagine glycosylation is found at N2431, N2467, N2531, N2549, N2579, N2591, N2749, N2764, N2972, and N3004. The PbH1 6 repeat unit spans residues 2460–2483 (RWELIISNTTFVNFDLTDCVSIRT). The 127-residue stretch at 2743–2869 (EGWGGHNHTI…PKKSWTRLAA (127 aa)) folds into the G8 2 domain. One copy of the PbH1 7 repeat lies at 3029 to 3051 (SHGIILNDNIVFGTVGHGIDLEG). Residue N3053 is glycosylated (N-linked (GlcNAc...) asparagine). The PbH1 8 repeat unit spans residues 3082–3104 (AKDINLYGNVVAGSERIGFHIQG). Residues N3136, N3165, N3221, N3484, N3702, N3721, and N3833 are each glycosylated (N-linked (GlcNAc...) asparagine). The stretch at 3158–3183 (ENSVEIENITLVDNSIGLLATVYVSS) is one PbH1 9 repeat. A helical transmembrane segment spans residues 3854–3874 (IILAVSLCSVASWLALCCLVC). The interval 3871–3888 (CLVCCWFRKSKSRKIKSE) is ciliary targeting sequence (CST). Disordered stretches follow at residues 3896-3919 (NDQK…KEDT), 3943-3965 (NGVS…REED), and 4031-4074 (LQGQ…QEQL). Composition is skewed to basic and acidic residues over residues 3910–3919 (RSQETKKEDT) and 3954–3965 (AVREEGSSREED). Positions 3947–3976 (RRKVSRRAVREEGSSREEDVVPAPRIISIT) are nuclear localization signal (NLS).

Interacts with CAMLG. Interacts with PKD2. Interacts (via CST) with ARF4; this interaction allows an efficient PKHD1 trafficking to the cilium. Interacts (via CST) with RAB8A; this interaction controls trafficking through the endomembrane systeme and to the cilium. Interacts (via CST) with TULP3; this interaction allows PKHD1 trafficking to the cilium. Post-translationally, palmitoylated. Palmitoylation facilitates the trafficking to the cilia and membrane targeting. N-glycosylated. In terms of processing, several proteolytic cleavages occur within the extracellular domain, whereas at least one cleavage occurs within the cytoplasmic domain. Cleaved by a probable proprotein convertase which produces an extracellular domain (polyductin extracellular domain, (PECD)) and a C-terminal fragment (polyductin transmembrane fragment (PTM)) which are tethered together by disulfide bonds. This extracellular domain (PECD) is then shed from the primary cilium by activation of a member of the ADAM metalloproteinase disintegrins family, resulting in concomitant release of an intra-cellular C-terminal fragment (ICD) via a gamma-secretase-dependent process. The proteolytic cleavage of the C-terminal intracellular fragment (ICD) is controlled by cytosolic calcium concentration and activation of PKC.

It localises to the cell membrane. Its subcellular location is the cytoplasm. The protein resides in the apical cell membrane. The protein localises to the cytoskeleton. It is found in the cilium basal body. It localises to the cell projection. Its subcellular location is the cilium. The protein resides in the spindle. The protein localises to the chromosome. It is found in the centromere. It localises to the nucleus. Its subcellular location is the secreted. The protein resides in the extracellular exosome. The protein localises to the endoplasmic reticulum. It is found in the golgi apparatus. Its function is as follows. Promotes ciliogenesis in renal epithelial cells and therefore participates in the tubules formation and/ or ensures the maintenance of the architecture of the lumen of the kidney. Has an impact on cellular symmetry by ensuring correct bipolar cell division through the regulation of centrosome duplication and mitotic spindle assembly and by maintaining oriented cell division (OCD) during tubular elongation through planar cell polarity (PCP) pathway. During epithelial cell morphogenesis, it also regulates cell-cell and cell-matrix adhesion and participates in cell motility. Promotes cell-cell contact through the positive regulation of PTK2 kinase activity leading to either positive regulation of epithelial cell proliferation through the HRAS/RAF1 pathways, or negative regulation of apoptosis through the PDK1/AKT1 pathway. May act in collecting-duct and biliary differentiation. May participate in the regulation of the cholangiocytes proliferation and the CCN2 production in an CXCL8-dependent manner. The chain is Fibrocystin from Canis lupus familiaris (Dog).